The sequence spans 241 residues: Endodeoxyribonuclease NucC (241 aa).

Residues aspartate 73, glutamate 104, and lysine 106 contribute to the active site. Mg(2+) is bound by residues aspartate 73 and glutamate 104.

It belongs to the NucC endonuclease family. In terms of assembly, self-oligomerizes. Forms homotrimers; in the presence of cAAA the trimers associate face-to-face to form homohexamers. The 2 cAAA-binding sites are on the exterior of the hexamer at the three-way junction, there are maximally 2 cyclic nucleotides per hexamer. Mg(2+) serves as cofactor.

With respect to regulation, activated by cAAA and to a lesser extent cAA; both cyclic nucleotides are products of its cognate CD-NTase. Cyclic nucleotide binding causes hexamerization. In terms of biological role, effector DNase of a CBASS antivirus system. CBASS (cyclic oligonucleotide-based antiphage signaling system) provides immunity against bacteriophage. The CD-NTase protein synthesizes cyclic nucleotides in response to infection; these serve as specific second messenger signals. The signals activate a diverse range of effectors, leading to bacterial cell death and thus abortive phage infection. A type III-C(AAA) CBASS system. A cyclic nucleotide-activated dsDNase. In the presence of 3',3',3'-cyclic AMP-AMP-AMP (cAAA) and to a lesser extent cyclic-di-AMP (c-di-AMP), endonucleolytically degrades dsDNA. Binds one cAAA in a pocket on one surface of the trimer; cAAA binding promotes hexamerization which is probably necessary for nuclease activation. The nuclease digests dsDNA to about 50 bp lengths. DNA has been modeled to contact a pair of juxtaposed active sites (one from each layer of the hexamer), accounting for cleavage on both strands. The polypeptide is Endodeoxyribonuclease NucC (Pseudomonas aeruginosa).